Here is a 371-residue protein sequence, read N- to C-terminus: MLLYLLITCLSFFFFSKSLSFPQWASKTKNLLSFYFSKYLFTNSLHQITPDLASPVLGKMSILDLPDLPLDCILELLPPSELCTMARVCSSLRERCVSDHLWEKHLKTKWGKILGPSAHKEWQCYLSSPYHLDSPHHKTSHLGLAKIISLMRSLSSIFRDDDHRRRYPSSIPLDSTMNFYLSLETGRFWFPAQVYNRENGHVGFMLSCYDAELSYDTDTNTFQARYPPHGKRAIAVEKDVTWERIRAAPVDASPHNLYVSDSLNELKPGDHIEIQWRRNKEFPYGWWYSVVGHMESCDGNLNHCQCHNSEMMVLEFNQYTVGSRWRKTMINRRDHREKGNEEDGFYGGIRKINCKEDIEMWKRLWPSSILE.

Residues 59-105 form the F-box domain; it reads KMSILDLPDLPLDCILELLPPSELCTMARVCSSLRERCVSDHLWEKH.

This is F-box protein At2g26850 from Arabidopsis thaliana (Mouse-ear cress).